A 469-amino-acid chain; its full sequence is Argininosuccinate lyase (469 aa).

Belongs to the lyase 1 family. Argininosuccinate lyase subfamily.

Its subcellular location is the cytoplasm. It carries out the reaction 2-(N(omega)-L-arginino)succinate = fumarate + L-arginine. It functions in the pathway amino-acid biosynthesis; L-arginine biosynthesis; L-arginine from L-ornithine and carbamoyl phosphate: step 3/3. The polypeptide is Argininosuccinate lyase (Polaromonas naphthalenivorans (strain CJ2)).